We begin with the raw amino-acid sequence, 270 residues long: Imidazole glycerol phosphate synthase subunit HisF (270 aa).

Catalysis depends on residues Asp-11 and Asp-130.

The protein belongs to the HisA/HisF family. Heterodimer of HisH and HisF.

The protein localises to the cytoplasm. It carries out the reaction 5-[(5-phospho-1-deoxy-D-ribulos-1-ylimino)methylamino]-1-(5-phospho-beta-D-ribosyl)imidazole-4-carboxamide + L-glutamine = D-erythro-1-(imidazol-4-yl)glycerol 3-phosphate + 5-amino-1-(5-phospho-beta-D-ribosyl)imidazole-4-carboxamide + L-glutamate + H(+). The protein operates within amino-acid biosynthesis; L-histidine biosynthesis; L-histidine from 5-phospho-alpha-D-ribose 1-diphosphate: step 5/9. IGPS catalyzes the conversion of PRFAR and glutamine to IGP, AICAR and glutamate. The HisF subunit catalyzes the cyclization activity that produces IGP and AICAR from PRFAR using the ammonia provided by the HisH subunit. This Chloroflexus aggregans (strain MD-66 / DSM 9485) protein is Imidazole glycerol phosphate synthase subunit HisF.